The chain runs to 299 residues: Acetaldehyde dehydrogenase (299 aa).

The Acyl-thioester intermediate role is filled by Cys-126. NAD(+)-binding positions include Ser-157–Asn-165 and Asn-267.

It belongs to the acetaldehyde dehydrogenase family.

It carries out the reaction acetaldehyde + NAD(+) + CoA = acetyl-CoA + NADH + H(+). The protein is Acetaldehyde dehydrogenase (mhpF) of Carboxydothermus hydrogenoformans (strain ATCC BAA-161 / DSM 6008 / Z-2901).